The primary structure comprises 1357 residues: DNA-directed RNA polymerase subunit beta (1357 aa).

Belongs to the RNA polymerase beta chain family. The RNAP catalytic core consists of 2 alpha, 1 beta, 1 beta' and 1 omega subunit. When a sigma factor is associated with the core the holoenzyme is formed, which can initiate transcription.

It carries out the reaction RNA(n) + a ribonucleoside 5'-triphosphate = RNA(n+1) + diphosphate. Functionally, DNA-dependent RNA polymerase catalyzes the transcription of DNA into RNA using the four ribonucleoside triphosphates as substrates. The sequence is that of DNA-directed RNA polymerase subunit beta from Hahella chejuensis (strain KCTC 2396).